A 403-amino-acid chain; its full sequence is F-box only protein 22 (403 aa).

Met-1 carries the N-acetylmethionine modification. The F-box domain occupies Phe-21–Thr-67. Thr-127 is modified (phosphothreonine). The residue at position 128 (Ser-128) is a Phosphoserine. Position 194 is an N6-acetyllysine (Lys-194).

In terms of assembly, directly interacts with SKP1 and CUL1. Interacts (via C-terminal) with KDM4A. Interacts with TP53. Interacts with MTOR; this interaction promotes 'lys-27'-linked ubiquitination of MTOR. As to quaternary structure, (Microbial infection) Interacts with SARS_COV-2 protein NSP5; this interaction attenuates NSP5-mediated inhibition of innate immunity. Post-translationally, phosphorylated by EIF2AK4 at Thr-127 causes cytoplasmic retention of FBXO22. In terms of tissue distribution, predominantly expressed in liver, also enriched in cardiac muscle.

Its subcellular location is the cytoplasm. The protein resides in the nucleus. It localises to the myofibril. The protein localises to the sarcomere. It is found in the z line. Functionally, substrate-recognition component of the SCF (SKP1-CUL1-F-box protein)-type E3 ubiquitin ligase complex that is implicated in the control of various cellular processes such as cell cycle control, transcriptional regulation, DNA damage repair, and apoptosis. Promotes the proteasome-dependent degradation of key sarcomeric proteins, such as alpha-actinin (ACTN2) and filamin-C (FLNC), essential for maintenance of normal contractile function. Acts as a key regulator of histone methylation marks namely H3K9 and H3K36 methylation through the regulation of histone demethylase KDM4A protein levels. In complex with KDM4A, also regulates the abundance of TP53 by targeting methylated TP53 for degradation at the late senescent stage. Under oxidative stress, promotes the ubiquitination and degradation of BACH1. Mechanistically, reactive oxygen species (ROS) covalently modify cysteine residues on the bZIP domain of BACH1, leading to its release from chromatin and making it accessible to FBXO22. Upon amino acid depletion, mediates 'Lys-27'-linked ubiquitination of MTOR and thereby inhibits substrate recruitment to mTORC1. Also inhibits SARS-CoV-2 replication by inducing NSP5 degradation. The protein is F-box only protein 22 (FBXO22) of Homo sapiens (Human).